A 365-amino-acid polypeptide reads, in one-letter code: 2-aminoethylphosphonate--pyruvate transaminase (365 aa).

Lys-194 bears the N6-(pyridoxal phosphate)lysine mark.

Belongs to the class-V pyridoxal-phosphate-dependent aminotransferase family. PhnW subfamily. As to quaternary structure, homodimer. It depends on pyridoxal 5'-phosphate as a cofactor.

The catalysed reaction is (2-aminoethyl)phosphonate + pyruvate = phosphonoacetaldehyde + L-alanine. In terms of biological role, involved in phosphonate degradation. This chain is 2-aminoethylphosphonate--pyruvate transaminase, found in Bacillus cereus (strain ZK / E33L).